Consider the following 605-residue polypeptide: Elongation factor 4 (605 aa).

The tr-type G domain occupies 9-192; the sequence is GMIRNFCIIA…AIVQRIPAPA (184 aa). Residues 21–26 and 139–142 contribute to the GTP site; these read DHGKST and NKID.

The protein belongs to the TRAFAC class translation factor GTPase superfamily. Classic translation factor GTPase family. LepA subfamily.

The protein resides in the cell inner membrane. The enzyme catalyses GTP + H2O = GDP + phosphate + H(+). In terms of biological role, required for accurate and efficient protein synthesis under certain stress conditions. May act as a fidelity factor of the translation reaction, by catalyzing a one-codon backward translocation of tRNAs on improperly translocated ribosomes. Back-translocation proceeds from a post-translocation (POST) complex to a pre-translocation (PRE) complex, thus giving elongation factor G a second chance to translocate the tRNAs correctly. Binds to ribosomes in a GTP-dependent manner. The sequence is that of Elongation factor 4 from Chlorobaculum parvum (strain DSM 263 / NCIMB 8327) (Chlorobium vibrioforme subsp. thiosulfatophilum).